The primary structure comprises 220 residues: UPF0502 protein VV2_0756 (220 aa).

The protein belongs to the UPF0502 family.

The sequence is that of UPF0502 protein VV2_0756 from Vibrio vulnificus (strain CMCP6).